Reading from the N-terminus, the 95-residue chain is Enhancer of yellow 2b transcription factor (95 aa).

The protein belongs to the ENY2 family. Expressed specifically in testis.

Its function is as follows. Testis-specific paralog of the ubiquitously expressed transcription and mRNA export factor e(y)2. Cannot functionally replace e(y)2. The chain is Enhancer of yellow 2b transcription factor (e(y)2b) from Drosophila melanogaster (Fruit fly).